The following is a 177-amino-acid chain: UPF0316 protein STH2077 (177 aa).

2 consecutive transmembrane segments (helical) span residues 9-29 (AALD…VNTV) and 41-61 (LASA…GLVV).

This sequence belongs to the UPF0316 family.

The protein resides in the cell membrane. In Symbiobacterium thermophilum (strain DSM 24528 / JCM 14929 / IAM 14863 / T), this protein is UPF0316 protein STH2077.